We begin with the raw amino-acid sequence, 1062 residues long: Isoleucine--tRNA ligase (1062 aa).

The 'HIGH' region signature appears at 47–57 (PYTTGHIHLGT). Residues 591–595 (KMSKS) carry the 'KMSKS' region motif. K594 serves as a coordination point for ATP.

Belongs to the class-I aminoacyl-tRNA synthetase family. IleS type 2 subfamily. As to quaternary structure, monomer. It depends on Zn(2+) as a cofactor.

It is found in the cytoplasm. The enzyme catalyses tRNA(Ile) + L-isoleucine + ATP = L-isoleucyl-tRNA(Ile) + AMP + diphosphate. Catalyzes the attachment of isoleucine to tRNA(Ile). As IleRS can inadvertently accommodate and process structurally similar amino acids such as valine, to avoid such errors it has two additional distinct tRNA(Ile)-dependent editing activities. One activity is designated as 'pretransfer' editing and involves the hydrolysis of activated Val-AMP. The other activity is designated 'posttransfer' editing and involves deacylation of mischarged Val-tRNA(Ile). This is Isoleucine--tRNA ligase from Methanospirillum hungatei JF-1 (strain ATCC 27890 / DSM 864 / NBRC 100397 / JF-1).